Consider the following 344-residue polypeptide: GTPase Obg (344 aa).

In terms of domain architecture, Obg spans 1–159 (MKFLDEAKVY…MWLILRLKLI (159 aa)). An OBG-type G domain is found at 160–327 (ADAGLVGLPN…ALRAIQAQLD (168 aa)). Residues 166 to 173 (GLPNAGKS), 191 to 195 (FTTLH), 212 to 215 (DIPG), 279 to 282 (SKAD), and 308 to 310 (SAA) each bind GTP. Positions 173 and 193 each coordinate Mg(2+).

This sequence belongs to the TRAFAC class OBG-HflX-like GTPase superfamily. OBG GTPase family. Monomer. Mg(2+) serves as cofactor.

It localises to the cytoplasm. An essential GTPase which binds GTP, GDP and possibly (p)ppGpp with moderate affinity, with high nucleotide exchange rates and a fairly low GTP hydrolysis rate. Plays a role in control of the cell cycle, stress response, ribosome biogenesis and in those bacteria that undergo differentiation, in morphogenesis control. The protein is GTPase Obg of Methylorubrum populi (strain ATCC BAA-705 / NCIMB 13946 / BJ001) (Methylobacterium populi).